Here is a 135-residue protein sequence, read N- to C-terminus: Ribosome-binding factor A (135 aa).

It belongs to the RbfA family. In terms of assembly, monomer. Binds 30S ribosomal subunits, but not 50S ribosomal subunits or 70S ribosomes.

The protein localises to the cytoplasm. In terms of biological role, one of several proteins that assist in the late maturation steps of the functional core of the 30S ribosomal subunit. Associates with free 30S ribosomal subunits (but not with 30S subunits that are part of 70S ribosomes or polysomes). Required for efficient processing of 16S rRNA. May interact with the 5'-terminal helix region of 16S rRNA. The sequence is that of Ribosome-binding factor A from Rhizobium meliloti (strain 1021) (Ensifer meliloti).